A 98-amino-acid polypeptide reads, in one-letter code: HssA/B-like protein 50 (98 aa).

Disordered stretches follow at residues 1 to 26 (MTLF…SFGS) and 68 to 98 (TRGS…CCGI). Over residues 84–98 (GHGGMGGGNGSCCGI) the composition is skewed to gly residues.

It belongs to the hssA/B family.

This Dictyostelium discoideum (Social amoeba) protein is HssA/B-like protein 50 (hssl50).